The sequence spans 329 residues: Serine/threonine-protein phosphatase PP1-alpha (329 aa).

Positions 64, 66, 92, and 124 each coordinate Mn(2+). Histidine 125 acts as the Proton donor in catalysis. Mn(2+)-binding residues include histidine 173 and histidine 248. The segment at 309–329 (GMNSGRPAVGGGRPGTTAGKK) is disordered.

It belongs to the PPP phosphatase family. PP-1 subfamily. In terms of assembly, interacts with lab-1; the interaction is direct. Interacts with knl-1; the interaction is direct. The cofactor is Mn(2+).

It carries out the reaction O-phospho-L-seryl-[protein] + H2O = L-seryl-[protein] + phosphate. The enzyme catalyses O-phospho-L-threonyl-[protein] + H2O = L-threonyl-[protein] + phosphate. In terms of biological role, serine/threonine-protein phosphatase which antagonizes the function of air-2 in the regulation of chromosome cohesion. Dephosphorylates histone H3 at 'Ser-10'. Dephosphorylates translation initiation factor eIF2alpha. Involved in the activation of chloride channel clh-3 during cell swelling and meiotic maturation. This chain is Serine/threonine-protein phosphatase PP1-alpha (gsp-1), found in Caenorhabditis briggsae.